The chain runs to 152 residues: MTITDLVLILFIAALLAYALYDQFIMPRRNGPTLLSIALLRRGRIDSVIFVGLVAILIYNNVTSHGAQMTTWLLSALALMGFYIFWIRTPRIIFKQRGFFFANVWIEYNRIKEMNLSEDGVLVMQLEQRRLLIRVRNIDDLEKIYKLLIENQ.

Residues 1–5 (MTITD) are Periplasmic-facing. A helical transmembrane segment spans residues 6 to 26 (LVLILFIAALLAYALYDQFIM). The Cytoplasmic segment spans residues 27 to 44 (PRRNGPTLLSIALLRRGR). A helical transmembrane segment spans residues 45–65 (IDSVIFVGLVAILIYNNVTSH). Position 66 (Gly66) is a topological domain, periplasmic. Residues 67-87 (AQMTTWLLSALALMGFYIFWI) traverse the membrane as a helical segment. Topologically, residues 88–152 (RTPRIIFKQR…KIYKLLIENQ (65 aa)) are cytoplasmic.

The protein belongs to the UPF0266 family.

It localises to the cell inner membrane. The sequence is that of UPF0266 membrane protein YobD (yobD) from Salmonella typhi.